A 324-amino-acid chain; its full sequence is R2-like ligand binding oxidase (324 aa).

Residues Glu-79, Glu-112, and His-115 each coordinate Mn(2+). The 3-(O4'-tyrosyl)-valine (Val-Tyr) cross-link spans 82–173 (VTEDIQPFMK…VNQVRASVTY (92 aa)). Fe cation is bound at residue Glu-112. The Fe cation site is built by Glu-178, Glu-213, and His-216. Residues 304-324 (PEALEEKFGEEDAKAMSEAAG) are disordered. Residues 307–318 (LEEKFGEEDAKA) are compositionally biased toward basic and acidic residues.

It belongs to the ribonucleoside diphosphate reductase small chain family. R2-like ligand binding oxidase subfamily. Homodimer. Requires Fe cation as cofactor. Mn(2+) is required as a cofactor.

Its function is as follows. Probable oxidase. The protein is R2-like ligand binding oxidase of Rhodococcus jostii (strain RHA1).